Consider the following 118-residue polypeptide: Small ribosomal subunit protein uS13 (118 aa).

Residues 94 to 118 form a disordered region; the sequence is GLPVRGQRTKTNARTRKGPRKPIKK.

It belongs to the universal ribosomal protein uS13 family. As to quaternary structure, part of the 30S ribosomal subunit. Forms a loose heterodimer with protein S19. Forms two bridges to the 50S subunit in the 70S ribosome.

Functionally, located at the top of the head of the 30S subunit, it contacts several helices of the 16S rRNA. In the 70S ribosome it contacts the 23S rRNA (bridge B1a) and protein L5 of the 50S subunit (bridge B1b), connecting the 2 subunits; these bridges are implicated in subunit movement. Contacts the tRNAs in the A and P-sites. This is Small ribosomal subunit protein uS13 from Klebsiella pneumoniae (strain 342).